The following is a 936-amino-acid chain: ABC transporter A family member 5 (936 aa).

Transmembrane regions (helical) follow at residues 34–54, 340–360, 393–413, 422–442, 454–474, 484–501, and 527–547; these read LIVI…LFDT, ASLI…PVML, FLAI…AIGL, SIQF…AFLV, VAAY…FQFL, WIYI…RGLY, and AMEE…IAAY. An ABC transporter domain is found at 614-851; it reads IVCDNLKKVY…YGGSYVLTMT (238 aa). 652 to 659 lines the ATP pocket; that stretch reads GPNGAGKT.

This sequence belongs to the ABC transporter superfamily. ABCA family. CPR flippase (TC 3.A.1.211) subfamily.

It is found in the membrane. This Arabidopsis thaliana (Mouse-ear cress) protein is ABC transporter A family member 5 (ABCA5).